The sequence spans 500 residues: Betaine aldehyde dehydrogenase, chloroplastic (500 aa).

A chloroplast-targeting transit peptide spans 1–7 (MSMPIPS). 238 to 243 (GSSATG) contributes to the NAD(+) binding site. Glutamate 260 serves as the catalytic Proton acceptor. Cysteine 294 functions as the Nucleophile in the catalytic mechanism.

This sequence belongs to the aldehyde dehydrogenase family. Homodimer.

The protein resides in the plastid. The protein localises to the chloroplast. The enzyme catalyses betaine aldehyde + NAD(+) + H2O = glycine betaine + NADH + 2 H(+). It functions in the pathway amine and polyamine biosynthesis; betaine biosynthesis via choline pathway; betaine from betaine aldehyde: step 1/1. The polypeptide is Betaine aldehyde dehydrogenase, chloroplastic (Beta vulgaris (Sugar beet)).